The primary structure comprises 955 residues: Eukaryotic translation initiation factor 3 subunit A (955 aa).

Residues 96-127 (LSLAEQRVTDAQAQADKIADEEEADDLEAEET) are a coiled coil. One can recognise a PCI domain in the interval 325 to 498 (YQRVASFVLL…RSVLFEEVRA (174 aa)). Coiled coils occupy residues 533–636 (AEAR…INAK) and 752–860 (KREA…KRAG). A compositionally biased stretch (basic and acidic residues) spans 789–858 (RAEEEAKAAA…ELEAKLEAKR (70 aa)). The tract at residues 789–955 (RAEEEAKAAA…GRYIPPSQRN (167 aa)) is disordered.

It belongs to the eIF-3 subunit A family. Component of the eukaryotic translation initiation factor 3 (eIF-3) complex.

It localises to the cytoplasm. RNA-binding component of the eukaryotic translation initiation factor 3 (eIF-3) complex, which is involved in protein synthesis of a specialized repertoire of mRNAs and, together with other initiation factors, stimulates binding of mRNA and methionyl-tRNAi to the 40S ribosome. The eIF-3 complex specifically targets and initiates translation of a subset of mRNAs involved in cell proliferation. The sequence is that of Eukaryotic translation initiation factor 3 subunit A from Yarrowia lipolytica (strain CLIB 122 / E 150) (Yeast).